The chain runs to 175 residues: MTGKELNKIVAAILFASLIAMIVGFIANILYKPNLHVLHRGYSIAIQKSSSNESATVIAQESVNIQELMKTANANHGREIAKKCLMCHSLDKDGPNKLGPHLWNIVGRPKASITDYKYSFAISKLGGVWDDENLFAFLHKPSSYAPGTKMSFAGISKPQDIADVILFLKNYVHDQ.

Residues 1-8 (MTGKELNK) are Cytoplasmic-facing. A helical; Signal-anchor transmembrane segment spans residues 9–29 (IVAAILFASLIAMIVGFIANI). Topologically, residues 30-175 (LYKPNLHVLH…LFLKNYVHDQ (146 aa)) are periplasmic. Residues C84, C87, H88, and M150 each coordinate heme c.

Belongs to the cytochrome c family. In terms of processing, binds 1 heme c group covalently per subunit.

It localises to the cell membrane. Functionally, may be involved in electron transfer from bc1 complex to aa3. The protein is Cytochrome c homolog (cycM) of Rickettsia prowazekii (strain Madrid E).